The following is a 361-amino-acid chain: DNA replication and repair protein RecF (361 aa).

30–37 (GPNGSGKT) serves as a coordination point for ATP.

It belongs to the RecF family.

Its subcellular location is the cytoplasm. Its function is as follows. The RecF protein is involved in DNA metabolism; it is required for DNA replication and normal SOS inducibility. RecF binds preferentially to single-stranded, linear DNA. It also seems to bind ATP. This is DNA replication and repair protein RecF from Yersinia pestis.